Consider the following 428-residue polypeptide: D-amino acid dehydrogenase (428 aa).

3 to 17 (VVILGSGVVGVASAY) is a binding site for FAD.

Belongs to the DadA oxidoreductase family. FAD serves as cofactor.

The catalysed reaction is a D-alpha-amino acid + A + H2O = a 2-oxocarboxylate + AH2 + NH4(+). The protein operates within amino-acid degradation; D-alanine degradation; NH(3) and pyruvate from D-alanine: step 1/1. In terms of biological role, oxidative deamination of D-amino acids. The sequence is that of D-amino acid dehydrogenase from Burkholderia multivorans (strain ATCC 17616 / 249).